Consider the following 328-residue polypeptide: Probable D,D-dipeptide transport ATP-binding protein DdpD (328 aa).

The region spanning 6–257 is the ABC transporter domain; sequence LDIQQLHLSF…PRHPYTIGLL (252 aa). 42–49 provides a ligand contact to ATP; it reads GESGSGKS.

It belongs to the ABC transporter superfamily. As to quaternary structure, the complex is composed of two ATP-binding proteins (DdpD and DdpF), two transmembrane proteins (DdpB and DdpC) and a solute-binding protein (DdpA).

The protein resides in the cell inner membrane. Its function is as follows. Part of the ABC transporter complex DdpABCDF, which is probably involved in D,D-dipeptide transport. Probably responsible for energy coupling to the transport system. The protein is Probable D,D-dipeptide transport ATP-binding protein DdpD of Escherichia coli (strain K12).